We begin with the raw amino-acid sequence, 155 residues long: Arginine repressor (155 aa).

It belongs to the ArgR family.

The protein resides in the cytoplasm. The protein operates within amino-acid biosynthesis; L-arginine biosynthesis [regulation]. Its function is as follows. Regulates arginine biosynthesis genes. The chain is Arginine repressor from Histophilus somni (strain 129Pt) (Haemophilus somnus).